The primary structure comprises 386 residues: Succinyl-diaminopimelate desuccinylase (386 aa).

His-72 contributes to the Zn(2+) binding site. The active site involves Asp-74. Position 105 (Asp-105) interacts with Zn(2+). The active-site Proton acceptor is Glu-139. Residues Glu-140, Glu-168, and His-353 each coordinate Zn(2+).

This sequence belongs to the peptidase M20A family. DapE subfamily. As to quaternary structure, homodimer. Requires Zn(2+) as cofactor. Co(2+) is required as a cofactor.

It catalyses the reaction N-succinyl-(2S,6S)-2,6-diaminopimelate + H2O = (2S,6S)-2,6-diaminopimelate + succinate. Its pathway is amino-acid biosynthesis; L-lysine biosynthesis via DAP pathway; LL-2,6-diaminopimelate from (S)-tetrahydrodipicolinate (succinylase route): step 3/3. Functionally, catalyzes the hydrolysis of N-succinyl-L,L-diaminopimelic acid (SDAP), forming succinate and LL-2,6-diaminopimelate (DAP), an intermediate involved in the bacterial biosynthesis of lysine and meso-diaminopimelic acid, an essential component of bacterial cell walls. The chain is Succinyl-diaminopimelate desuccinylase from Rhodospirillum centenum (strain ATCC 51521 / SW).